We begin with the raw amino-acid sequence, 103 residues long: Large ribosomal subunit protein bL21 (103 aa).

This sequence belongs to the bacterial ribosomal protein bL21 family. As to quaternary structure, part of the 50S ribosomal subunit. Contacts protein L20.

In terms of biological role, this protein binds to 23S rRNA in the presence of protein L20. The protein is Large ribosomal subunit protein bL21 of Paracidovorax citrulli (strain AAC00-1) (Acidovorax citrulli).